A 403-amino-acid chain; its full sequence is Phosphoglycerate kinase (403 aa).

Residues 21 to 23 (DFN), arginine 36, 59 to 62 (HLGR), arginine 119, and arginine 159 each bind substrate. ATP-binding positions include lysine 214, glycine 301, glutamate 332, and 359-362 (GGDS).

The protein belongs to the phosphoglycerate kinase family. In terms of assembly, monomer.

It is found in the cytoplasm. The catalysed reaction is (2R)-3-phosphoglycerate + ATP = (2R)-3-phospho-glyceroyl phosphate + ADP. The protein operates within carbohydrate degradation; glycolysis; pyruvate from D-glyceraldehyde 3-phosphate: step 2/5. This is Phosphoglycerate kinase from Lactobacillus helveticus (strain DPC 4571).